A 452-amino-acid polypeptide reads, in one-letter code: Chromosomal replication initiator protein DnaA (452 aa).

The tract at residues 1 to 84 (MTENEQIFWN…SIEYVFEETQ (84 aa)) is domain I, interacts with DnaA modulators. Residues 84-110 (QSTSNSPQISQNKTAELATETLPFVQN) form a domain II region. The tract at residues 111–329 (DLNPKYSFDN…GALKDISLVA (219 aa)) is domain III, AAA+ region. 4 residues coordinate ATP: G155, G157, K158, and T159. A domain IV, binds dsDNA region spans residues 330–452 (NFKKLDVITV…EMETIKNKIK (123 aa)).

The protein belongs to the DnaA family. Oligomerizes as a right-handed, spiral filament on DNA at oriC.

It localises to the cytoplasm. Plays an essential role in the initiation and regulation of chromosomal replication. ATP-DnaA binds to the origin of replication (oriC) to initiate formation of the DNA replication initiation complex once per cell cycle. Binds the DnaA box (a 9 base pair repeat at the origin) and separates the double-stranded (ds)DNA. Forms a right-handed helical filament on oriC DNA; dsDNA binds to the exterior of the filament while single-stranded (ss)DNA is stabiized in the filament's interior. The ATP-DnaA-oriC complex binds and stabilizes one strand of the AT-rich DNA unwinding element (DUE), permitting loading of DNA polymerase. After initiation quickly degrades to an ADP-DnaA complex that is not apt for DNA replication. Binds acidic phospholipids. This Streptococcus mutans serotype c (strain ATCC 700610 / UA159) protein is Chromosomal replication initiator protein DnaA.